The primary structure comprises 447 residues: NADP-specific glutamate dehydrogenase (447 aa).

Residues Lys-92, Gln-113, and Lys-116 each contribute to the substrate site. Residue Lys-128 is the Proton donor of the active site. Residue Gly-167 coordinates substrate. NADP(+) contacts are provided by Thr-211 and Asn-242. Residue Ser-380 participates in substrate binding.

It belongs to the Glu/Leu/Phe/Val dehydrogenases family. Homohexamer.

The catalysed reaction is L-glutamate + NADP(+) + H2O = 2-oxoglutarate + NH4(+) + NADPH + H(+). Its function is as follows. Catalyzes the reversible oxidative deamination of glutamate to alpha-ketoglutarate and ammonia. The chain is NADP-specific glutamate dehydrogenase (gdhA) from Salmonella typhi.